A 290-amino-acid polypeptide reads, in one-letter code: NH(3)-dependent NAD(+) synthetase (290 aa).

Position 33–40 (33–40 (GVSGGVDS)) interacts with ATP. Aspartate 39 serves as a coordination point for Mg(2+). Residue arginine 154 participates in deamido-NAD(+) binding. Position 174 (threonine 174) interacts with ATP. Glutamate 179 contributes to the Mg(2+) binding site. Deamido-NAD(+) is bound by residues lysine 187 and aspartate 194. 2 residues coordinate ATP: lysine 203 and serine 225.

It belongs to the NAD synthetase family. In terms of assembly, homodimer.

The enzyme catalyses deamido-NAD(+) + NH4(+) + ATP = AMP + diphosphate + NAD(+) + H(+). The protein operates within cofactor biosynthesis; NAD(+) biosynthesis; NAD(+) from deamido-NAD(+) (ammonia route): step 1/1. Catalyzes the ATP-dependent amidation of deamido-NAD to form NAD. Uses ammonia as a nitrogen source. In Thermotoga neapolitana (strain ATCC 49049 / DSM 4359 / NBRC 107923 / NS-E), this protein is NH(3)-dependent NAD(+) synthetase.